The following is a 164-amino-acid chain: CB1 cannabinoid receptor-interacting protein 1 (164 aa).

It belongs to the CNRIP family. As to quaternary structure, interacts with the cannabinoid receptor CNR1 (via C-terminus). Does not interact with cannabinoid receptor CNR2.

Suppresses cannabinoid receptor CNR1-mediated tonic inhibition of voltage-gated calcium channels. This is CB1 cannabinoid receptor-interacting protein 1 (Cnrip1) from Rattus norvegicus (Rat).